Consider the following 231-residue polypeptide: LexA repressor (231 aa).

Positions 26-46 (FDEMKLALDLRSKSGIHRLIT) form a DNA-binding region, H-T-H motif. The interval 79–98 (VGFQPRVIDGDRPDRPRPAN) is disordered. Residues 86-95 (IDGDRPDRPR) are compositionally biased toward basic and acidic residues. Active-site for autocatalytic cleavage activity residues include Ser152 and Lys190.

The protein belongs to the peptidase S24 family. Homodimer.

The catalysed reaction is Hydrolysis of Ala-|-Gly bond in repressor LexA.. Represses a number of genes involved in the response to DNA damage (SOS response), including recA and lexA. In the presence of single-stranded DNA, RecA interacts with LexA causing an autocatalytic cleavage which disrupts the DNA-binding part of LexA, leading to derepression of the SOS regulon and eventually DNA repair. This is LexA repressor from Ruegeria pomeroyi (strain ATCC 700808 / DSM 15171 / DSS-3) (Silicibacter pomeroyi).